The chain runs to 864 residues: Protein sey1 (864 aa).

Topologically, residues 1–747 (MATNGHFATI…KRSAIGGMTQ (747 aa)) are cytoplasmic. Residues 49 to 305 (GFNYHLISVF…IPADGFSRYA (257 aa)) enclose the GB1/RHD3-type G domain. Residue 59–66 (GSQSTGKS) coordinates GTP. Positions 480–506 (SDYKQELALYEKELADVSGRLRREEMR) form a coiled coil. Residues 675-701 (DRWIGHTPSSATPADEEDLPPIGGVDE) are disordered. Residues 688–701 (ADEEDLPPIGGVDE) are compositionally biased toward acidic residues. Residues 748–768 (VPLYFYGLLLALGWNEIIAVL) traverse the membrane as a helical segment. The Lumenal portion of the chain corresponds to 769–771 (RNP). Residues 772 to 792 (AYFFLLFVCAVGAYVTYQLNL) form a helical membrane-spanning segment. Over 793 to 864 (WGPIIKMTEA…TSADEDMDDL (72 aa)) the chain is Cytoplasmic. The disordered stretch occupies residues 830 to 864 (AMSAGSGRSGEQYELSDLSKKGKARTSADEDMDDL).

This sequence belongs to the TRAFAC class dynamin-like GTPase superfamily. GB1/RHD3 GTPase family. RHD3 subfamily.

It is found in the endoplasmic reticulum membrane. Cooperates with the reticulon proteins and tubule-shaping DP1 family proteins to generate and maintain the structure of the tubular endoplasmic reticulum network. Has GTPase activity, which is required for its function in ER organization. This chain is Protein sey1 (sey1), found in Neosartorya fischeri (strain ATCC 1020 / DSM 3700 / CBS 544.65 / FGSC A1164 / JCM 1740 / NRRL 181 / WB 181) (Aspergillus fischerianus).